The following is a 344-amino-acid chain: GTP 3',8-cyclase (344 aa).

The 221-residue stretch at 19 to 239 (PFGRTIDYLR…ANYTLTDLPD (221 aa)) folds into the Radical SAM core domain. Position 28 (arginine 28) interacts with GTP. The [4Fe-4S] cluster site is built by cysteine 35 and cysteine 39. Tyrosine 41 provides a ligand contact to S-adenosyl-L-methionine. Cysteine 42 provides a ligand contact to [4Fe-4S] cluster. Arginine 77 contacts GTP. Glycine 81 lines the S-adenosyl-L-methionine pocket. Threonine 111 is a binding site for GTP. Residue serine 135 coordinates S-adenosyl-L-methionine. Position 171 (lysine 171) interacts with GTP. Methionine 205 is an S-adenosyl-L-methionine binding site. The [4Fe-4S] cluster site is built by cysteine 268 and cysteine 271. 273–275 (RVR) provides a ligand contact to GTP. Cysteine 285 serves as a coordination point for [4Fe-4S] cluster.

Belongs to the radical SAM superfamily. MoaA family. In terms of assembly, monomer and homodimer. Requires [4Fe-4S] cluster as cofactor.

It catalyses the reaction GTP + AH2 + S-adenosyl-L-methionine = (8S)-3',8-cyclo-7,8-dihydroguanosine 5'-triphosphate + 5'-deoxyadenosine + L-methionine + A + H(+). It participates in cofactor biosynthesis; molybdopterin biosynthesis. Functionally, catalyzes the cyclization of GTP to (8S)-3',8-cyclo-7,8-dihydroguanosine 5'-triphosphate. The protein is GTP 3',8-cyclase of Rhodopseudomonas palustris (strain ATCC BAA-98 / CGA009).